Here is a 336-residue protein sequence, read N- to C-terminus: Fructose-1,6-bisphosphatase class 1 (336 aa).

Residues glutamate 90, aspartate 112, leucine 114, and aspartate 115 each coordinate Mg(2+). Substrate is bound by residues 115 to 118 (DGSS), asparagine 207, and lysine 273. Residue glutamate 279 coordinates Mg(2+).

The protein belongs to the FBPase class 1 family. As to quaternary structure, homotetramer. It depends on Mg(2+) as a cofactor.

The protein resides in the cytoplasm. It carries out the reaction beta-D-fructose 1,6-bisphosphate + H2O = beta-D-fructose 6-phosphate + phosphate. Its pathway is carbohydrate biosynthesis; gluconeogenesis. In Xanthomonas euvesicatoria pv. vesicatoria (strain 85-10) (Xanthomonas campestris pv. vesicatoria), this protein is Fructose-1,6-bisphosphatase class 1.